The following is a 380-amino-acid chain: Cytochrome b (380 aa).

4 helical membrane passes run 34–54, 78–99, 114–134, and 179–199; these read FGSL…LLAT, WLIR…YLHI, WNTG…GYVL, and FFAL…IHLT. Heme b contacts are provided by His-84 and His-98. Heme b-binding residues include His-183 and His-197. His-202 contacts a ubiquinone. The next 4 membrane-spanning stretches (helical) occupy residues 227 to 247, 289 to 309, 321 to 341, and 348 to 368; these read LKDI…ALFS, LGGV…PLLH, LSQL…WVGS, and FIII…LLFP.

This sequence belongs to the cytochrome b family. In terms of assembly, the cytochrome bc1 complex contains 11 subunits: 3 respiratory subunits (MT-CYB, CYC1 and UQCRFS1), 2 core proteins (UQCRC1 and UQCRC2) and 6 low-molecular weight proteins (UQCRH/QCR6, UQCRB/QCR7, UQCRQ/QCR8, UQCR10/QCR9, UQCR11/QCR10 and a cleavage product of UQCRFS1). This cytochrome bc1 complex then forms a dimer. It depends on heme b as a cofactor.

The protein resides in the mitochondrion inner membrane. Its function is as follows. Component of the ubiquinol-cytochrome c reductase complex (complex III or cytochrome b-c1 complex) that is part of the mitochondrial respiratory chain. The b-c1 complex mediates electron transfer from ubiquinol to cytochrome c. Contributes to the generation of a proton gradient across the mitochondrial membrane that is then used for ATP synthesis. The sequence is that of Cytochrome b (MT-CYB) from Uria aalge (Common mure).